Here is a 272-residue protein sequence, read N- to C-terminus: Phosphonates import ATP-binding protein PhnC 1 (272 aa).

The 245-residue stretch at 2-246 (LRIQALTKTY…VLTSIYGEED (245 aa)) folds into the ABC transporter domain. 35 to 42 (GPSGAGKS) provides a ligand contact to ATP.

It belongs to the ABC transporter superfamily. Phosphonates importer (TC 3.A.1.9.1) family. As to quaternary structure, the complex is composed of two ATP-binding proteins (PhnC), two transmembrane proteins (PhnE) and a solute-binding protein (PhnD).

The protein localises to the cell inner membrane. It carries out the reaction phosphonate(out) + ATP + H2O = phosphonate(in) + ADP + phosphate + H(+). Functionally, part of the ABC transporter complex PhnCDE involved in phosphonates import. Responsible for energy coupling to the transport system. This Rhodopseudomonas palustris (strain BisB18) protein is Phosphonates import ATP-binding protein PhnC 1.